A 308-amino-acid chain; its full sequence is tRNA-cytidine(32) 2-sulfurtransferase (308 aa).

The PP-loop motif signature appears at 39–44 (SGGKDS). [4Fe-4S] cluster-binding residues include Cys-114, Cys-117, and Cys-205.

The protein belongs to the TtcA family. As to quaternary structure, homodimer. Mg(2+) serves as cofactor. It depends on [4Fe-4S] cluster as a cofactor.

It is found in the cytoplasm. The enzyme catalyses cytidine(32) in tRNA + S-sulfanyl-L-cysteinyl-[cysteine desulfurase] + AH2 + ATP = 2-thiocytidine(32) in tRNA + L-cysteinyl-[cysteine desulfurase] + A + AMP + diphosphate + H(+). The protein operates within tRNA modification. In terms of biological role, catalyzes the ATP-dependent 2-thiolation of cytidine in position 32 of tRNA, to form 2-thiocytidine (s(2)C32). The sulfur atoms are provided by the cysteine/cysteine desulfurase (IscS) system. This chain is tRNA-cytidine(32) 2-sulfurtransferase, found in Cupriavidus taiwanensis (strain DSM 17343 / BCRC 17206 / CCUG 44338 / CIP 107171 / LMG 19424 / R1) (Ralstonia taiwanensis (strain LMG 19424)).